The chain runs to 340 residues: uncharacterized protein (340 aa).

The first 23 residues, 1-23 (MQKKVLSLVLVLAVLESIVPVSA), serve as a signal peptide directing secretion.

This is an uncharacterized protein from Archaeoglobus fulgidus (strain ATCC 49558 / DSM 4304 / JCM 9628 / NBRC 100126 / VC-16).